Reading from the N-terminus, the 708-residue chain is Ion-translocating oxidoreductase complex subunit C (708 aa).

4Fe-4S ferredoxin-type domains follow at residues 369–397 and 407–436; these read GEPQEEQSCIRCSACADACPADLLPQQLY and KATTHNIADCIECGACAWVCPSNIPLVQYF. Cys-377, Cys-380, Cys-383, Cys-387, Cys-416, Cys-419, Cys-422, and Cys-426 together coordinate [4Fe-4S] cluster. The disordered stretch occupies residues 663 to 684; sequence KARKLEQQQTNAEPEEQVDPRK.

The protein belongs to the 4Fe4S bacterial-type ferredoxin family. RnfC subfamily. In terms of assembly, the complex is composed of six subunits: RsxA, RsxB, RsxC, RsxD, RsxE and RsxG. The cofactor is [4Fe-4S] cluster.

The protein resides in the cell inner membrane. Functionally, part of a membrane-bound complex that couples electron transfer with translocation of ions across the membrane. Required to maintain the reduced state of SoxR. This is Ion-translocating oxidoreductase complex subunit C from Shigella boydii serotype 18 (strain CDC 3083-94 / BS512).